A 58-amino-acid polypeptide reads, in one-letter code: Lantibiotic macedovicin (58 aa).

The propeptide occupies 1-25; the sequence is MMNATENQIFVETVSDQELEMLIGG. 2,3-didehydrobutyrine is present on residues threonine 33 and threonine 35. 2 consecutive cross-links (beta-methyllanthionine (Thr-Cys)) follow at residues 33 to 38 and 35 to 57; these read TLTKDC and TKDC…CKNC. A disulfide bridge links cysteine 46 with cysteine 54.

In terms of processing, maturation of macedovicin involves the enzymatic dehydration of Thr-33 and Thr-35 into dehydrobutyrine residues, that can form a beta-methyllanthionine bond with Cys-38 and Cys-57, respectively. This is followed by membrane translocation and cleavage of the modified precursor.

The protein resides in the secreted. In terms of biological role, lanthionine-containing peptide antibiotic (lantibiotic) active on Gram-positive bacteria. Macedovicin inhibits a broad spectrum of lactic acid bacteria, several food spoilage species (e.g. Clostridium spp.) and oral streptococci. The bactericidal activity of lantibiotics is based on depolarization of energized bacterial cytoplasmic membranes, initiated by the formation of aqueous transmembrane pores. This is Lantibiotic macedovicin from Streptococcus macedonicus (strain ACA-DC 198).